The following is a 226-amino-acid chain: Lipoprotein-releasing system ATP-binding protein LolD 1 (226 aa).

An ABC transporter domain is found at 5–225; sequence LKLDGIRKSY…IVRVVDGKIA (221 aa). 42-49 lines the ATP pocket; sequence GPSGSGKS.

Belongs to the ABC transporter superfamily. Lipoprotein translocase (TC 3.A.1.125) family. The complex is composed of two ATP-binding proteins (LolD) and two transmembrane proteins (LolC and LolE).

It is found in the cell inner membrane. Functionally, part of the ABC transporter complex LolCDE involved in the translocation of mature outer membrane-directed lipoproteins, from the inner membrane to the periplasmic chaperone, LolA. Responsible for the formation of the LolA-lipoprotein complex in an ATP-dependent manner. This chain is Lipoprotein-releasing system ATP-binding protein LolD 1, found in Rhodopseudomonas palustris (strain ATCC BAA-98 / CGA009).